The sequence spans 216 residues: Large ribosomal subunit protein uL24m (216 aa).

The N-terminal 9 residues, 1–9 (MRLTALLSM), are a transit peptide targeting the mitochondrion. Residues 56-89 (VVRGDTVEVLSGKEKGKQGKVAQVIRARNWVILE) enclose the KOW domain. Residues 167–186 (PQQWKDGPKDTSPEDTLQKT) are disordered.

Belongs to the universal ribosomal protein uL24 family. As to quaternary structure, component of the mitochondrial ribosome large subunit (39S) which comprises a 16S rRNA and about 50 distinct proteins.

Its subcellular location is the mitochondrion. This chain is Large ribosomal subunit protein uL24m (mrpl24), found in Danio rerio (Zebrafish).